The chain runs to 221 residues: Sugar transporter SWEET1 (221 aa).

7 consecutive transmembrane segments (helical) span residues 3–23 (AGGF…LGMF), 42–62 (VQFL…SYGA), 68–88 (ILIV…LAYL), 96–116 (VVLL…GYFW), 129–149 (LGLF…ADLA), 160–180 (LSYP…LYGF), and 186–206 (YIMV…WLFW). Residues 10–94 (LIYGACVVFT…LAYLHYCPRK (85 aa)) enclose the MtN3/slv 1 domain. The 86-residue stretch at 127 to 212 (QQLGLFCSVF…WLFWKYPQEQ (86 aa)) folds into the MtN3/slv 2 domain. Residues 149-221 (AKVIQTKSTQ…QDRNYWLLQT (73 aa)) are mediates interaction with TRPV2.

It belongs to the SWEET sugar transporter family. Interacts with TRPV2; the interaction probably occurs intracellularly and depends on TRPV2 N-glycosylation. In terms of tissue distribution, ubiquitously expressed with highest expression in oviduct, epididymis and intestine.

The protein localises to the golgi apparatus membrane. The protein resides in the cell membrane. Its function is as follows. Mediates sugar transport across membranes. May stimulate V(D)J recombination by the activation of RAG1. This chain is Sugar transporter SWEET1 (SLC50A1), found in Homo sapiens (Human).